The primary structure comprises 142 residues: FAD synthase (142 aa).

ATP-binding positions include 9 to 10 (TF), 14 to 17 (HPGH), and Asp92.

Belongs to the archaeal FAD synthase family. Homodimer. A divalent metal cation serves as cofactor.

It carries out the reaction FMN + ATP + H(+) = FAD + diphosphate. Its pathway is cofactor biosynthesis; FAD biosynthesis; FAD from FMN: step 1/1. Its function is as follows. Catalyzes the transfer of the AMP portion of ATP to flavin mononucleotide (FMN) to produce flavin adenine dinucleotide (FAD) coenzyme. This is FAD synthase from Haloferax volcanii (strain ATCC 29605 / DSM 3757 / JCM 8879 / NBRC 14742 / NCIMB 2012 / VKM B-1768 / DS2) (Halobacterium volcanii).